The primary structure comprises 766 residues: DNA ligase (766 aa).

Residues 1–30 (MSTVNAKGAKPATDANGQSLNPEEPSEALR) are disordered. NAD(+)-binding positions include 57–61 (DAEYD), 106–107 (SL), and glutamate 141. Lysine 143 acts as the N6-AMP-lysine intermediate in catalysis. NAD(+)-binding residues include arginine 164, glutamate 201, lysine 317, and lysine 341. Residues cysteine 435, cysteine 438, cysteine 454, and cysteine 460 each contribute to the Zn(2+) site. Residues 669–758 (STPRTLEGVT…PEAFGDRADA (90 aa)) enclose the BRCT domain. Residues 747-766 (QGPEAFGDRADAADQPAAGE) form a disordered region.

The protein belongs to the NAD-dependent DNA ligase family. LigA subfamily. It depends on Mg(2+) as a cofactor. Mn(2+) is required as a cofactor.

The catalysed reaction is NAD(+) + (deoxyribonucleotide)n-3'-hydroxyl + 5'-phospho-(deoxyribonucleotide)m = (deoxyribonucleotide)n+m + AMP + beta-nicotinamide D-nucleotide.. In terms of biological role, DNA ligase that catalyzes the formation of phosphodiester linkages between 5'-phosphoryl and 3'-hydroxyl groups in double-stranded DNA using NAD as a coenzyme and as the energy source for the reaction. It is essential for DNA replication and repair of damaged DNA. This Kocuria rhizophila (strain ATCC 9341 / DSM 348 / NBRC 103217 / DC2201) protein is DNA ligase.